The following is a 159-amino-acid chain: NAD(P)H-quinone oxidoreductase subunit J, chloroplastic (159 aa).

This sequence belongs to the complex I 30 kDa subunit family. In terms of assembly, NDH is composed of at least 16 different subunits, 5 of which are encoded in the nucleus.

It localises to the plastid. The protein resides in the chloroplast thylakoid membrane. The catalysed reaction is a plastoquinone + NADH + (n+1) H(+)(in) = a plastoquinol + NAD(+) + n H(+)(out). It catalyses the reaction a plastoquinone + NADPH + (n+1) H(+)(in) = a plastoquinol + NADP(+) + n H(+)(out). Functionally, NDH shuttles electrons from NAD(P)H:plastoquinone, via FMN and iron-sulfur (Fe-S) centers, to quinones in the photosynthetic chain and possibly in a chloroplast respiratory chain. The immediate electron acceptor for the enzyme in this species is believed to be plastoquinone. Couples the redox reaction to proton translocation, and thus conserves the redox energy in a proton gradient. In Agrostis stolonifera (Creeping bentgrass), this protein is NAD(P)H-quinone oxidoreductase subunit J, chloroplastic.